A 322-amino-acid chain; its full sequence is DNA primase small subunit PriS (322 aa).

Catalysis depends on residues Asp86, Asp88, and Asp226.

It belongs to the eukaryotic-type primase small subunit family. As to quaternary structure, heterodimer of a small subunit (PriS) and a large subunit (PriL). Mg(2+) serves as cofactor. Requires Mn(2+) as cofactor.

Catalytic subunit of DNA primase, an RNA polymerase that catalyzes the synthesis of short RNA molecules used as primers for DNA polymerase during DNA replication. The small subunit contains the primase catalytic core and has DNA synthesis activity on its own. Binding to the large subunit stabilizes and modulates the activity, increasing the rate of DNA synthesis while decreasing the length of the DNA fragments, and conferring RNA synthesis capability. The DNA polymerase activity may enable DNA primase to also catalyze primer extension after primer synthesis. May also play a role in DNA repair. In Thermoplasma acidophilum (strain ATCC 25905 / DSM 1728 / JCM 9062 / NBRC 15155 / AMRC-C165), this protein is DNA primase small subunit PriS.